Consider the following 158-residue polypeptide: uncharacterized protein (158 aa).

Residues 33-53 (VLAAVPQLGAAKVLVLLLLGV) traverse the membrane as a helical segment.

The protein resides in the membrane. This is an uncharacterized protein from Saccharomyces cerevisiae (strain ATCC 204508 / S288c) (Baker's yeast).